The chain runs to 154 residues: Myoglobin (154 aa).

The Globin domain maps to 2–148 (GLSDGEWQLV…FRNDMAAKYK (147 aa)). Serine 4 bears the Phosphoserine mark. Residue histidine 65 participates in nitrite binding. Histidine 65 provides a ligand contact to O2. Threonine 68 bears the Phosphothreonine mark. A heme b-binding site is contributed by histidine 94.

This sequence belongs to the globin family. As to quaternary structure, monomeric.

Its subcellular location is the cytoplasm. The protein localises to the sarcoplasm. It catalyses the reaction Fe(III)-heme b-[protein] + nitric oxide + H2O = Fe(II)-heme b-[protein] + nitrite + 2 H(+). The catalysed reaction is H2O2 + AH2 = A + 2 H2O. In terms of biological role, monomeric heme protein which primary function is to store oxygen and facilitate its diffusion within muscle tissues. Reversibly binds oxygen through a pentacoordinated heme iron and enables its timely and efficient release as needed during periods of heightened demand. Depending on the oxidative conditions of tissues and cells, and in addition to its ability to bind oxygen, it also has a nitrite reductase activity whereby it regulates the production of bioactive nitric oxide. Under stress conditions, like hypoxia and anoxia, it also protects cells against reactive oxygen species thanks to its pseudoperoxidase activity. This Ochotona curzoniae (Black-lipped pika) protein is Myoglobin (MB).